Consider the following 151-residue polypeptide: Nucleoside diphosphate kinase (151 aa).

K11, F59, R87, T93, R104, and N114 together coordinate ATP. Catalysis depends on H117, which acts as the Pros-phosphohistidine intermediate.

This sequence belongs to the NDK family. As to quaternary structure, homotetramer. Mg(2+) serves as cofactor.

Its subcellular location is the cytoplasm. The catalysed reaction is a 2'-deoxyribonucleoside 5'-diphosphate + ATP = a 2'-deoxyribonucleoside 5'-triphosphate + ADP. It carries out the reaction a ribonucleoside 5'-diphosphate + ATP = a ribonucleoside 5'-triphosphate + ADP. In terms of biological role, major role in the synthesis of nucleoside triphosphates other than ATP. The ATP gamma phosphate is transferred to the NDP beta phosphate via a ping-pong mechanism, using a phosphorylated active-site intermediate. This chain is Nucleoside diphosphate kinase, found in Prochlorococcus marinus (strain MIT 9211).